Here is a 251-residue protein sequence, read N- to C-terminus: Ubiquinone/menaquinone biosynthesis C-methyltransferase UbiE (251 aa).

S-adenosyl-L-methionine-binding positions include Thr-74, Asp-95, 123 to 124, and Ser-140; that span reads NA.

The protein belongs to the class I-like SAM-binding methyltransferase superfamily. MenG/UbiE family.

It catalyses the reaction a 2-demethylmenaquinol + S-adenosyl-L-methionine = a menaquinol + S-adenosyl-L-homocysteine + H(+). The enzyme catalyses a 2-methoxy-6-(all-trans-polyprenyl)benzene-1,4-diol + S-adenosyl-L-methionine = a 5-methoxy-2-methyl-3-(all-trans-polyprenyl)benzene-1,4-diol + S-adenosyl-L-homocysteine + H(+). Its pathway is quinol/quinone metabolism; menaquinone biosynthesis; menaquinol from 1,4-dihydroxy-2-naphthoate: step 2/2. It functions in the pathway cofactor biosynthesis; ubiquinone biosynthesis. In terms of biological role, methyltransferase required for the conversion of demethylmenaquinol (DMKH2) to menaquinol (MKH2) and the conversion of 2-polyprenyl-6-methoxy-1,4-benzoquinol (DDMQH2) to 2-polyprenyl-3-methyl-6-methoxy-1,4-benzoquinol (DMQH2). The chain is Ubiquinone/menaquinone biosynthesis C-methyltransferase UbiE from Klebsiella pneumoniae subsp. pneumoniae (strain ATCC 700721 / MGH 78578).